Here is a 122-residue protein sequence, read N- to C-terminus: Large ribosomal subunit protein bL12 (122 aa).

The protein belongs to the bacterial ribosomal protein bL12 family. In terms of assembly, homodimer. Part of the ribosomal stalk of the 50S ribosomal subunit. Forms a multimeric L10(L12)X complex, where L10 forms an elongated spine to which 2 to 4 L12 dimers bind in a sequential fashion. Binds GTP-bound translation factors.

Forms part of the ribosomal stalk which helps the ribosome interact with GTP-bound translation factors. Is thus essential for accurate translation. In Deinococcus geothermalis (strain DSM 11300 / CIP 105573 / AG-3a), this protein is Large ribosomal subunit protein bL12.